A 120-amino-acid chain; its full sequence is MKLNRVESTRSRHRRVRRKVGGTGDRPRLAVFRSHQHIYAQVIDDQQQHTLVAASSLEPEFKTQYGEGDTCAASTQIGKLIAERSLAKGIQKVVFDRGGKLYHGRVKALAEAAREAGLEF.

Residues 1 to 10 (MKLNRVESTR) show a composition bias toward basic and acidic residues. A disordered region spans residues 1–26 (MKLNRVESTRSRHRRVRRKVGGTGDR). Over residues 11 to 20 (SRHRRVRRKV) the composition is skewed to basic residues.

The protein belongs to the universal ribosomal protein uL18 family. As to quaternary structure, part of the 50S ribosomal subunit; part of the 5S rRNA/L5/L18/L25 subcomplex. Contacts the 5S and 23S rRNAs.

This is one of the proteins that bind and probably mediate the attachment of the 5S RNA into the large ribosomal subunit, where it forms part of the central protuberance. The chain is Large ribosomal subunit protein uL18 from Cyanothece sp. (strain PCC 7425 / ATCC 29141).